The chain runs to 490 residues: Probable cytosol aminopeptidase (490 aa).

2 residues coordinate Mn(2+): K256 and D261. The active site involves K268. Mn(2+)-binding residues include D280, D340, and E342. R344 is an active-site residue.

The protein belongs to the peptidase M17 family. It depends on Mn(2+) as a cofactor.

The protein localises to the cytoplasm. It catalyses the reaction Release of an N-terminal amino acid, Xaa-|-Yaa-, in which Xaa is preferably Leu, but may be other amino acids including Pro although not Arg or Lys, and Yaa may be Pro. Amino acid amides and methyl esters are also readily hydrolyzed, but rates on arylamides are exceedingly low.. The catalysed reaction is Release of an N-terminal amino acid, preferentially leucine, but not glutamic or aspartic acids.. Functionally, presumably involved in the processing and regular turnover of intracellular proteins. Catalyzes the removal of unsubstituted N-terminal amino acids from various peptides. This Prochlorococcus marinus (strain MIT 9313) protein is Probable cytosol aminopeptidase.